We begin with the raw amino-acid sequence, 420 residues long: RNA-directed RNA polymerase (420 aa).

Residues 199–325 (GTICETDISG…IWFKGLEEYL (127 aa)) enclose the RdRp catalytic domain.

It belongs to the ssRNA positive-strand viruses RNA-directed RNA polymerase family. Might be cleaved to release the mature protein(s).

It catalyses the reaction RNA(n) + a ribonucleoside 5'-triphosphate = RNA(n+1) + diphosphate. RNA-dependent RNA polymerase which replicates the viral genome. In Mushroom bacilliform virus (isolate Australia/AUS LF-1) (MBV), this protein is RNA-directed RNA polymerase.